A 1054-amino-acid chain; its full sequence is Calcium-transporting ATPase 2, endoplasmic reticulum-type (1054 aa).

Over 1–53 (MEEEKSFSAWSWSVEQCLKEYKTRLDKGLTSEDVQIRRQKYGFNELAKEKGKP) the chain is Cytoplasmic. The helical transmembrane segment at 54 to 74 (LWHLVLEQFDDTLVKILLGAA) threads the bilayer. The Lumenal portion of the chain corresponds to 75 to 98 (FISFVLAFLGEEHGSGSGFEAFVE). Residues 99–118 (PFVIVLILILNAVVGVWQES) traverse the membrane as a helical segment. Over 119–262 (NAEKALEALK…ESETPLKKKL (144 aa)) the chain is Cytoplasmic. The chain crosses the membrane as a helical span at residues 263–282 (DEFGSRLTTAICIVCVLVWM). Residues 283 to 312 (INYKNFVSWDVVDGYKPVNIKFSFEKCTYY) lie on the Lumenal side of the membrane. A helical membrane pass occupies residues 313–330 (FKIAVALAVAAIPEGLPA). Residues valine 321, alanine 322, isoleucine 324, and glutamate 326 each contribute to the Ca(2+) site. Over 331-782 (VITTCLALGT…AEGRSIYNNM (452 aa)) the chain is Cytoplasmic. Catalysis depends on aspartate 368, which acts as the 4-aspartylphosphate intermediate. The Mg(2+) site is built by aspartate 727 and aspartate 731. The helical transmembrane segment at 783–802 (KAFIRYMISSNVGEVISIFL) threads the bilayer. The Ca(2+) site is built by asparagine 793 and glutamate 796. Over 803–812 (TAALGIPECM) the chain is Lumenal. A helical membrane pass occupies residues 813 to 833 (IPVQLLWVNLVTDGPPATALG). Positions 821, 824, and 825 each coordinate Ca(2+). Over 834-853 (FNPADIDIMKKPPRKSDDCL) the chain is Cytoplasmic. Residues 854–876 (IDSWVLIRYLVIGSYVGVATVGI) traverse the membrane as a helical segment. At 877 to 949 (FVLWYTQASF…YFTLGKVKPM (73 aa)) the chain is on the lumenal side. The chain crosses the membrane as a helical span at residues 950–969 (TLSLTVLVAIEMFNSLNALS). A Ca(2+)-binding site is contributed by glutamate 960. Residues 970 to 982 (EDNSLLTMPPWRN) are Cytoplasmic-facing. A helical membrane pass occupies residues 983 to 1001 (PWLLVAMTVSFALHCVILY). The Lumenal segment spans residues 1002 to 1016 (VPFLANVFGIVPLSF). Residues 1017-1037 (REWFVVILVSFPVILIDEALK) traverse the membrane as a helical segment. The Cytoplasmic segment spans residues 1038 to 1054 (FIGRCRRTRIKKKIKTM).

The protein belongs to the cation transport ATPase (P-type) (TC 3.A.3) family. Type IIA subfamily.

It localises to the membrane. It catalyses the reaction Ca(2+)(in) + ATP + H2O = Ca(2+)(out) + ADP + phosphate + H(+). In terms of biological role, this magnesium-dependent enzyme catalyzes the hydrolysis of ATP coupled with the translocation of calcium from the cytosol to an endomembrane compartment. This Arabidopsis thaliana (Mouse-ear cress) protein is Calcium-transporting ATPase 2, endoplasmic reticulum-type (ECA2).